The chain runs to 703 residues: MSLLKERKPKKPHYIPRPPGKPFKYKCFQCPFTCNEKSHLFNHMKYGLCKNSITLVSEQDRVPKCSKPNSSDPKQTNQPDPVVKPTSSKPVPSGLSHLDAKLQHSLAKDDIKENLDLHARGPHRCLGQKPTPHKEAAPPSPAPEAAVGTQPVLEGAVRPSAFVPVGEHRLKGQELTETPEALALTHAPAKASSFHTKSAFHAPGYPWRAGSPFLTPEFPHKIPSTKGFGATSPYVHPSITEYPPHFYTEHGLATIYSPYLLAGNSPECDSPLLSVYGAQDQRHFLPHPGPIPKHLNPAPSTYDHYRFFQQYHSSLPIPYGFYRPESAFSSYGLRLPPVAGISRDQSSHLLEEAALGYQALSPSKLNSSNSHKKHTELEKQSPTPEAKEPSKDGQRDTEGTKMSPRAGSAATGSPGRPSPTNFTQTSQPCAGLCGLSDAPASSAPGRIPPPEQGLAAFKPIKKNTEHPHSQAPENRAVSPKSLEALSTDAPTQLGSLEAAPSSPEDGSRAAPLNLSTKPEAEPAATCSPAHGGFVEPQDAPLNLSVKDPCNALTSRPSVCSPPRGAEPAAAPTPSPTQQREPASSGDGPDPSSVEAPVPSPTGKAQDIRAADSDEQKQTAAVALCQLAAYSPGNVEPAAQEPTCRPDAPTPRAPESQEAQCDLRPKGQKRTSPREVGKGQQGSKKAKPSDTARVFTLRKRTRVS.

The CCHC-type zinc-finger motif lies at Y25–N51. Zn(2+) is bound by residues C27, C30, H43, and C49. 4 disordered regions span residues D60 to S96, G121 to V147, P362 to Q617, and N633 to S703. Over residues K67–Q78 the composition is skewed to polar residues. Residues P79–S93 are compositionally biased toward low complexity. A compositionally biased stretch (basic and acidic residues) spans T375–G399. Over residues S418–P428 the composition is skewed to polar residues. The span at S583–S592 shows a compositional bias: low complexity. The segment covering Q605–K616 has biased composition (basic and acidic residues).

It is found in the nucleus. In terms of biological role, transcription factor involved in epidermis differentiation. Required for terminal epidermal differentiation: acts downstream of p63/TP63 and activates expression of late epidermal differentiation genes. Specifically binds to the promoter of KLF4 and promotes its expression. This Bos taurus (Bovine) protein is Zinc finger protein 750 (ZNF750).